The primary structure comprises 423 residues: MKMIVIADDFTGSNDTGVQLAKKGARTEVMLSASQKPSRRADVLVINTESRAMPADQAASAVYAALSPWCETSPAPLVYKKIDSTFRGNIGAEVTAAMRASQRKLAVIAAAIPAAGRTTLEGKCLVNGVPLLETEFASDPKTPIVSSRIAEIVALQSEIPVYEVFLQDVRRGGLSALLTAYAAEGEGIIVVDAVEERDLTLIAQAACEQPSMPLLVGAAGLANALPVELFMQDRQRLPVLVVAGSMSEATRRQVDNALCRGRAEVVDIDAARMVSDSAEQEIASVVEQACALLSQHRHTILRTSRRAEDRQLIDALCEKSAMSRQQLGERLSQRLGVVTLNIIEQARIGGLFLTGGDIATAVAGALGAEGYRIQSEVAPCIPCGTFVNSEIDDLPVITKAGGFGSDSTLCDALYYIEEMYCGD.

Residues Asp9, Arg51, and 81–84 each bind substrate; that span reads KIDS. Residues Ser245, 355–358, and Gly401 contribute to the ATP site; that span reads GGDI.

This sequence belongs to the four-carbon acid sugar kinase family.

The enzyme catalyses D-threonate + ATP = 4-O-phospho-D-threonate + ADP + H(+). Functionally, catalyzes the ATP-dependent phosphorylation of D-threonate to D-threonate 4-phosphate. Can also phosphorylate 4-hydroxy-L-threonine, with lower efficiency. This side reaction may serve to deal with the toxicity of 4-hydroxy-L-threonine by converting it into 4-hydroxy-L-threonine 4-phosphate, a useful product that can be used by PdxA2. The sequence is that of D-threonate kinase from Salmonella typhimurium (strain LT2 / SGSC1412 / ATCC 700720).